The following is a 291-amino-acid chain: 4-hydroxy-tetrahydrodipicolinate synthase (291 aa).

Residue threonine 44 participates in pyruvate binding. Tyrosine 132 (proton donor/acceptor) is an active-site residue. Lysine 161 (schiff-base intermediate with substrate) is an active-site residue. Isoleucine 202 is a pyruvate binding site.

It belongs to the DapA family. Homotetramer; dimer of dimers.

It localises to the cytoplasm. It carries out the reaction L-aspartate 4-semialdehyde + pyruvate = (2S,4S)-4-hydroxy-2,3,4,5-tetrahydrodipicolinate + H2O + H(+). The protein operates within amino-acid biosynthesis; L-lysine biosynthesis via DAP pathway; (S)-tetrahydrodipicolinate from L-aspartate: step 3/4. Catalyzes the condensation of (S)-aspartate-beta-semialdehyde [(S)-ASA] and pyruvate to 4-hydroxy-tetrahydrodipicolinate (HTPA). This is 4-hydroxy-tetrahydrodipicolinate synthase from Endomicrobium trichonymphae.